A 1079-amino-acid polypeptide reads, in one-letter code: Electrogenic sodium bicarbonate cotransporter 1 (1079 aa).

The segment at 1–62 (MEDEAVLDRG…EKREKERISE (62 aa)) is required for interaction with AHCYL1. At 1-466 (MEDEAVLDRG…FASDFYDALN (466 aa)) the chain is on the cytoplasmic side. Phosphotyrosine is present on tyrosine 30. The span at 39–52 (YRRRRRHKRKTGHK) shows a compositional bias: basic residues. The interval 39 to 78 (YRRRRRHKRKTGHKEKREKERISENYSDKSDVENADESSS) is disordered. At threonine 49 the chain carries Phosphothreonine; by PKA. A compositionally biased stretch (basic and acidic residues) spans 53-70 (EKREKERISENYSDKSDV). Residues serine 61, serine 65, serine 68, serine 223, serine 232, serine 233, and serine 245 each carry the phosphoserine modification. The interval 237 to 265 (MFTSPDNGSPAMTHRNLTSSSLNDISDKP) is disordered. Phosphothreonine occurs at positions 249 and 254. Over residues 251–260 (RNLTSSSLND) the composition is skewed to polar residues. Phosphoserine occurs at positions 256, 257, and 262. Residues 467–491 (IQSLSAILFIYLATVTNAITFGGLL) traverse the membrane as a helical segment. Residues 492 to 501 (GDATDNMQGV) lie on the Extracellular side of the membrane. The chain crosses the membrane as a helical span at residues 502 to 520 (LESFLGTAVSGAIFCLFAG). A topological domain (cytoplasmic) is located at residue glutamine 521. Residues 522–542 (PLTILSSTGPVLVFERLLFNF) traverse the membrane as a discontinuously helical segment. Topologically, residues 543–550 (SKDHNFDY) are extracellular. A helical membrane pass occupies residues 551–571 (LEFRLWIGLWSAFLCLILVAT). Topologically, residues 572 to 585 (DASFLVQYFTRFTE) are cytoplasmic. Residues 586-609 (EGFSSLISFIFIYDAFKKMIKLAD) traverse the membrane as a helical segment. The Extracellular portion of the chain corresponds to 610 to 692 (YYPINSDFKV…GNNCNFVPDV (83 aa)). Residues 693 to 710 (TLMSFILFLGTYTSSMAL) form a helical membrane-spanning segment. At 711–725 (KKFKTSRYFPTTARK) the chain is on the cytoplasmic side. A helical membrane pass occupies residues 726–745 (LISDFAIILSILIFCVIDAL). The Extracellular portion of the chain corresponds to 746-779 (VGVDTPKLIVPSEFKPTSPNRGWFVPPFGGNPWW). Positions 748-779 (VDTPKLIVPSEFKPTSPNRGWFVPPFGGNPWW) are interaction with CA4. The helical transmembrane segment at 780 to 807 (VYLAAAIPALLVTILIFMDQQITAVIVN) threads the bilayer. Residues 808–819 (RKEHKLKKGAGY) are Cytoplasmic-facing. Residues 820–836 (HLDLFWVAILMVVCSFM) form a helical membrane-spanning segment. A topological domain (extracellular) is located at residue alanine 837. Residues 838-855 (LPWYVAATVISIAHIDSL) traverse the membrane as a discontinuously helical segment. Residues 856 to 877 (KMETETSAPGEQPKFLGVREQR) lie on the Cytoplasmic side of the membrane. The chain crosses the membrane as a helical span at residues 878–894 (VTGTLVFILTGLSVFMA). The Extracellular portion of the chain corresponds to 895-901 (PILKFIP). Residues 902–918 (MPVLYGVFLYMGVASLN) form a helical membrane-spanning segment. The Cytoplasmic portion of the chain corresponds to 919-960 (GVQFMDRLKLLLMPLKHQPDFIYLRHVPLRRVHLFTFLQVLC). Residues 961 to 986 (LALLWILKSTVAAIIFPVMILALVAV) constitute an intramembrane region (discontinuously helical). The Cytoplasmic portion of the chain corresponds to 987–1079 (RKGMDYLFSQ…STFLERHTSC (93 aa)). A CA2-binding region spans residues 1002-1004 (LDD). The disordered stretch occupies residues 1012–1079 (KKKEDEKKKK…STFLERHTSC (68 aa)). Phosphoserine; by PKA is present on serine 1026. Serine 1029 is subject to Phosphoserine. The CA2-binding stretch occupies residues 1030–1033 (DNDD). Phosphoserine is present on residues serine 1034 and serine 1044. The segment at 1057-1059 (FLS) is required for basolateral targeting. Residues 1062-1079 (KPSDREKSSTFLERHTSC) show a composition bias toward basic and acidic residues. Serine 1069 is subject to Phosphoserine.

This sequence belongs to the anion exchanger (TC 2.A.31) family. As to quaternary structure, homodimer. Interacts with CA2/carbonic anhydrase 2 and CA4/carbonic anhydrase 4 which may regulate transporter activity. Isoform 1 but not isoform 2 interacts with AHCYL1 (via PEST domain when phosphorylated); the interaction increases SLC4A4 isoform 1 activity. Interacts with AHCYL2. Phosphorylation of Ser-1026 by PKA increases the binding of CA2 and changes the Na(+):HCO3(-) stoichiometry of the transporter from 3:1 to 2:1. Phosphorylated in presence of STK39 and dephosphorylated in presence of PP1 phosphatase; phosphorylation seems to inhibit SLC4A4 activity. Post-translationally, N-glycosylated. May not be necessary for the transporter basic functions. In terms of tissue distribution, expressed in colonic mucosa, kidney cortex and to gastric mucosa.

It is found in the basolateral cell membrane. It localises to the cell membrane. It carries out the reaction 2 hydrogencarbonate(out) + Na(+)(out) = 2 hydrogencarbonate(in) + Na(+)(in). The catalysed reaction is 3 hydrogencarbonate(out) + Na(+)(out) = 3 hydrogencarbonate(in) + Na(+)(in). Electrogenic sodium/bicarbonate cotransporter with a Na(+):HCO3(-) stoichiometry varying from 1:2 to 1:3. May regulate bicarbonate influx/efflux at the basolateral membrane of cells and regulate intracellular pH. The sequence is that of Electrogenic sodium bicarbonate cotransporter 1 (SLC4A4) from Oryctolagus cuniculus (Rabbit).